The sequence spans 508 residues: MVNTNIRPDEISSSIRKEIEGYTQEVKVVNVGTVLQVGDGIARIYGLDKVMAGELVEFEDGTVGIALNSESDNVGAVLMGDGLTIQEGSSVKATGKIAQIPVSDAYLGRVVNALAQPIDGKGQIPASESRPIESPAPGIISRRSVYEPMQTGLIAIDSMIPIGRGQRELIIGDRQTGKTAVATDTILNQKGQNVICVYVAIGQKASSVAQVVNTFEERGAMEYTIVVAEAANSPATLQYLAPYTGAALAEYFMYRKQHTLIIYDDLSKQAQAYRQMSLLLRRPPGREAYPGDVFYLHSRLLERAAKSSSQLGEGSMTASPIVETQAGDVSAYIPTNVISITDGQIFLSADSFNAGIRPAINVGISVSRVGSAAQIKAMKQVAGKLKLELAQFAELEAFAQFASDLDKATQNQLARGQRLRELLKQSQSAPLAVEEQVATIYTGVNGFSDKLKVEQVKRFLVQLREYITTNKPQFGEIIRSTKMFTEQAENILKEAIEEHIELFLLQEK.

172 to 179 provides a ligand contact to ATP; sequence GDRQTGKT.

Belongs to the ATPase alpha/beta chains family. In terms of assembly, F-type ATPases have 2 components, CF(1) - the catalytic core - and CF(0) - the membrane proton channel. CF(1) has five subunits: alpha(3), beta(3), gamma(1), delta(1), epsilon(1). CF(0) has four main subunits: a, b, b' and c.

The protein resides in the plastid. It is found in the chloroplast thylakoid membrane. The enzyme catalyses ATP + H2O + 4 H(+)(in) = ADP + phosphate + 5 H(+)(out). Produces ATP from ADP in the presence of a proton gradient across the membrane. The alpha chain is a regulatory subunit. In Angiopteris evecta (Mule's foot fern), this protein is ATP synthase subunit alpha, chloroplastic.